The sequence spans 347 residues: MNPIILIIILMTVMLGTIIVMISTHWLLIWIGFEMNMLAIIPIMMKKHNPRATEASTKYFLTQSTASMLLMMAIIINLMFSGQWTVMKLFNPMASMLMTMALAMKLGMAPFHFWVPEVTQGIPLSSGLILLTWQKLAPMSVLYQILPSINLDLILTLSILSITIGGWGGLNQTQLRKIMAYSSIAHMGWMTAVLLYNPTMTLLNLIIYIIMTSTMFTLFMANSTTTTLSLSHTWNKAPIMTILVLITLLSMGGLPPLSGFMPKWMIIQEMTKNDSIILPTLMAITALLNLYFYMRLTYSTALTMFPSTNNMKMKWQFPTTKRMTLLPTMTVLSTMLLPLTPILSILE.

Transmembrane regions (helical) follow at residues 3–23 (PIIL…VMIS), 25–45 (HWLL…PIMM), 67–87 (SMLL…WTVM), 96–116 (MLMT…FWVP), 122–142 (IPLS…MSVL), 145–165 (ILPS…ITIG), 178–198 (IMAY…LYNP), 200–220 (MTLL…TLFM), 237–257 (APIM…LPPL), 274–294 (DSII…YFYM), and 325–345 (LLPT…ILSI).

This sequence belongs to the complex I subunit 2 family. In terms of assembly, core subunit of respiratory chain NADH dehydrogenase (Complex I) which is composed of 45 different subunits. Interacts with TMEM242.

The protein localises to the mitochondrion inner membrane. It carries out the reaction a ubiquinone + NADH + 5 H(+)(in) = a ubiquinol + NAD(+) + 4 H(+)(out). Functionally, core subunit of the mitochondrial membrane respiratory chain NADH dehydrogenase (Complex I) which catalyzes electron transfer from NADH through the respiratory chain, using ubiquinone as an electron acceptor. Essential for the catalytic activity and assembly of complex I. The protein is NADH-ubiquinone oxidoreductase chain 2 of Ovis aries (Sheep).